Reading from the N-terminus, the 235-residue chain is 2-C-methyl-D-erythritol 4-phosphate cytidylyltransferase (235 aa).

Belongs to the IspD/TarI cytidylyltransferase family. IspD subfamily.

It carries out the reaction 2-C-methyl-D-erythritol 4-phosphate + CTP + H(+) = 4-CDP-2-C-methyl-D-erythritol + diphosphate. Its pathway is isoprenoid biosynthesis; isopentenyl diphosphate biosynthesis via DXP pathway; isopentenyl diphosphate from 1-deoxy-D-xylulose 5-phosphate: step 2/6. Functionally, catalyzes the formation of 4-diphosphocytidyl-2-C-methyl-D-erythritol from CTP and 2-C-methyl-D-erythritol 4-phosphate (MEP). The chain is 2-C-methyl-D-erythritol 4-phosphate cytidylyltransferase from Pseudomonas entomophila (strain L48).